A 384-amino-acid chain; its full sequence is Spermidine/putrescine import ATP-binding protein PotA (384 aa).

Residues 6-238 enclose the ABC transporter domain; it reads ITFNNVSKTF…PINHFVANFI (233 aa). Position 40–47 (40–47) interacts with ATP; sequence GASGSGKS.

This sequence belongs to the ABC transporter superfamily. Spermidine/putrescine importer (TC 3.A.1.11.1) family. In terms of assembly, the complex is composed of two ATP-binding proteins (PotA), two transmembrane proteins (PotB and PotC) and a solute-binding protein (PotD).

The protein resides in the cell membrane. The catalysed reaction is ATP + H2O + polyamine-[polyamine-binding protein]Side 1 = ADP + phosphate + polyamineSide 2 + [polyamine-binding protein]Side 1.. Functionally, part of the ABC transporter complex PotABCD involved in spermidine/putrescine import. Responsible for energy coupling to the transport system. This Streptococcus pyogenes serotype M6 (strain ATCC BAA-946 / MGAS10394) protein is Spermidine/putrescine import ATP-binding protein PotA.